The chain runs to 286 residues: Diaminopimelate epimerase (286 aa).

2 residues coordinate substrate: Asn-13 and Asn-66. Residue Cys-75 is the Proton donor of the active site. Substrate is bound by residues 76–77, Asn-165, Asn-198, and 216–217; these read GN and ER. Cys-225 acts as the Proton acceptor in catalysis. A substrate-binding site is contributed by 226–227; sequence GT.

The protein belongs to the diaminopimelate epimerase family. Homodimer.

The protein resides in the cytoplasm. It carries out the reaction (2S,6S)-2,6-diaminopimelate = meso-2,6-diaminopimelate. It participates in amino-acid biosynthesis; L-lysine biosynthesis via DAP pathway; DL-2,6-diaminopimelate from LL-2,6-diaminopimelate: step 1/1. Its function is as follows. Catalyzes the stereoinversion of LL-2,6-diaminopimelate (L,L-DAP) to meso-diaminopimelate (meso-DAP), a precursor of L-lysine and an essential component of the bacterial peptidoglycan. This chain is Diaminopimelate epimerase, found in Oceanobacillus iheyensis (strain DSM 14371 / CIP 107618 / JCM 11309 / KCTC 3954 / HTE831).